The chain runs to 122 residues: Large ribosomal subunit protein uL14 (122 aa).

It belongs to the universal ribosomal protein uL14 family. In terms of assembly, part of the 50S ribosomal subunit. Forms a cluster with proteins L3 and L19. In the 70S ribosome, L14 and L19 interact and together make contacts with the 16S rRNA in bridges B5 and B8.

In terms of biological role, binds to 23S rRNA. Forms part of two intersubunit bridges in the 70S ribosome. This chain is Large ribosomal subunit protein uL14, found in Xanthomonas oryzae pv. oryzae (strain MAFF 311018).